Here is a 526-residue protein sequence, read N- to C-terminus: Microphthalmia-associated transcription factor (526 aa).

Residue Ser5 is modified to Phosphoserine; by MTOR. 2 disordered regions span residues 20 to 54 and 155 to 179; these read EPKT…STMT and VLSS…SAPN. The segment covering 34–44 has biased composition (low complexity); the sequence is SSSSAEHSGAS. A Phosphoserine; by MAPK modification is found at Ser180. The transactivation stretch occupies residues 224 to 291; the sequence is DDVIDDIISL…PANLPNIKRE (68 aa). A Phosphoserine modification is found at Ser280. Lys289 participates in a covalent cross-link: Glycyl lysine isopeptide (Lys-Gly) (interchain with G-Cter in SUMO). Residues 311–364 form the bHLH domain; that stretch reads QKKDNHNLIERRRRFNINDRIKELGTLIPKSNDPDMRWNKGTILKASVDYIRKL. The stretch at 355–401 forms a coiled coil; it reads KASVDYIRKLQREQQRAKDLENRQKKLEHANRHLLLRVQELEMQARA. Residues 374–395 form a leucine-zipper region; sequence LENRQKKLEHANRHLLLRVQEL. The DNA-binding regulation stretch occupies residues 401–431; it reads AHGLSLIPSTGLCSPDLVNRIIKQEPVLENC. A Phosphoserine; by GSK3 modification is found at Ser405. Residue Ser414 is modified to Phosphoserine. A Glycyl lysine isopeptide (Lys-Gly) (interchain with G-Cter in SUMO) cross-link involves residue Lys423. Ser491 bears the Phosphoserine mark. Residues 496-526 form a disordered region; the sequence is TDPLLSSVSPGASKTSSRRSSMSAEETEHAC. Residues 507–519 are compositionally biased toward low complexity; it reads ASKTSSRRSSMSA. The residue at position 516 (Ser516) is a Phosphoserine; by RPS6KA1.

This sequence belongs to the MiT/TFE family. Homodimer or heterodimer; dimerization is mediated via the coiled coil region. Efficient DNA binding requires dimerization with another bHLH protein. Binds DNA in the form of homodimer or heterodimer with either TFE3, TFEB or TFEC. Interacts with small GTPases Rag (RagA/RRAGA, RagB/RRAGB, RagC/RRAGC and/or RagD/RRAGD); promoting its recruitment to lysosomal membrane in the presence of nutrients. Interacts with KARS1. Identified in a complex with HINT1 and CTNNB1. Interacts with VSX2. When nutrients are present, phosphorylation by MTOR at Ser-5 via non-canonical mTORC1 pathway promotes ubiquitination by the SCF(BTRC) complex, followed by degradation. Phosphorylation at Ser-405 significantly enhances the ability to bind the tyrosinase promoter. Phosphorylation by MARK3/cTAK1 at Ser-280 promotes association with 14-3-3/YWHA adapters and retention in the cytosol. Phosphorylated at Ser-180 and Ser-516 following KIT signaling, triggering a short live activation: Phosphorylation at Ser-180 and Ser-516 by MAPK and RPS6KA1, respectively, activate the transcription factor activity but also promote ubiquitination and subsequent degradation by the proteasome. Phosphorylated in response to blue light (415nm). Post-translationally, ubiquitinated by the SCF(BTRC) and SCF(FBXW11) complexes following phosphorylation ar Ser-5 by MTOR, leading to its degradation by the proteasome. Ubiquitinated following phosphorylation at Ser-180, leading to subsequent degradation by the proteasome. Deubiquitinated by USP13, preventing its degradation. As to expression, in the adult, expressed at high levels in the heart, skin, skeletal muscle, intestine, stomach, kidney, ovary, lung, spleen and brain. In the embryo, expressed in developing eye, ear, skin and heart. Isoform M is expressed in melanocytes and also in the embryonic and adult heart while isoform A and isoform H are more widely expressed.

It is found in the nucleus. Its subcellular location is the cytoplasm. The protein localises to the lysosome membrane. In terms of biological role, transcription factor that acts as a master regulator of melanocyte survival and differentiation as well as melanosome biogenesis. Binds to M-boxes (5'-TCATGTG-3') and symmetrical DNA sequences (E-boxes) (5'-CACGTG-3') found in the promoter of pigmentation genes, such as tyrosinase (TYR). Involved in the cellular response to amino acid availability by acting downstream of MTOR: in the presence of nutrients, MITF phosphorylation by MTOR promotes its inactivation. Upon starvation or lysosomal stress, inhibition of MTOR induces MITF dephosphorylation, resulting in transcription factor activity. Plays an important role in melanocyte development by regulating the expression of tyrosinase (TYR) and tyrosinase-related protein 1 (TYRP1). Plays a critical role in the differentiation of various cell types, such as neural crest-derived melanocytes, mast cells, osteoclasts and optic cup-derived retinal pigment epithelium. This chain is Microphthalmia-associated transcription factor (Mitf), found in Mus musculus (Mouse).